Consider the following 193-residue polypeptide: Large ribosomal subunit protein uL18 (193 aa).

The protein belongs to the universal ribosomal protein uL18 family. In terms of assembly, part of the 50S ribosomal subunit. Contacts the 5S and 23S rRNAs.

Functionally, this is one of the proteins that bind and probably mediate the attachment of the 5S RNA into the large ribosomal subunit, where it forms part of the central protuberance. This chain is Large ribosomal subunit protein uL18, found in Methanococcus vannielii (strain ATCC 35089 / DSM 1224 / JCM 13029 / OCM 148 / SB).